We begin with the raw amino-acid sequence, 1072 residues long: Carbamoyl phosphate synthase large chain (1072 aa).

The tract at residues 1–401 (MPKRLDINTI…SLLKAVRSLE (401 aa)) is carboxyphosphate synthetic domain. ATP is bound by residues R129, R169, G175, G176, K208, I210, E215, G241, V242, H243, Q284, and E298. The 195-residue stretch at 133–327 (RTLMQELNEP…IAKLAAKIAV (195 aa)) folds into the ATP-grasp 1 domain. Positions 284, 298, and 300 each coordinate Mg(2+). Q284, E298, and N300 together coordinate Mn(2+). The interval 402-546 (LGVYHLELEH…YSTYGDENES (145 aa)) is oligomerization domain. The interval 547–929 (VRTDRKSVVV…ALYKGLVASG (383 aa)) is carbamoyl phosphate synthetic domain. In terms of domain architecture, ATP-grasp 2 spans 671–861 (EAALTQLGIP…MANVATKVIL (191 aa)). ATP-binding residues include R707, R746, E752, G777, V778, H779, S780, Q820, and E832. Mg(2+)-binding residues include Q820, E832, and N834. Mn(2+) contacts are provided by Q820, E832, and N834. One can recognise an MGS-like domain in the interval 930-1072 (INIPTHGSVI…QTKRHEVVHA (143 aa)). Residues 930–1072 (INIPTHGSVI…QTKRHEVVHA (143 aa)) are allosteric domain.

This sequence belongs to the CarB family. Composed of two chains; the small (or glutamine) chain promotes the hydrolysis of glutamine to ammonia, which is used by the large (or ammonia) chain to synthesize carbamoyl phosphate. Tetramer of heterodimers (alpha,beta)4. Mg(2+) serves as cofactor. Requires Mn(2+) as cofactor.

It carries out the reaction hydrogencarbonate + L-glutamine + 2 ATP + H2O = carbamoyl phosphate + L-glutamate + 2 ADP + phosphate + 2 H(+). The catalysed reaction is hydrogencarbonate + NH4(+) + 2 ATP = carbamoyl phosphate + 2 ADP + phosphate + 2 H(+). The protein operates within amino-acid biosynthesis; L-arginine biosynthesis; carbamoyl phosphate from bicarbonate: step 1/1. It participates in pyrimidine metabolism; UMP biosynthesis via de novo pathway; (S)-dihydroorotate from bicarbonate: step 1/3. In terms of biological role, large subunit of the glutamine-dependent carbamoyl phosphate synthetase (CPSase). CPSase catalyzes the formation of carbamoyl phosphate from the ammonia moiety of glutamine, carbonate, and phosphate donated by ATP, constituting the first step of 2 biosynthetic pathways, one leading to arginine and/or urea and the other to pyrimidine nucleotides. The large subunit (synthetase) binds the substrates ammonia (free or transferred from glutamine from the small subunit), hydrogencarbonate and ATP and carries out an ATP-coupled ligase reaction, activating hydrogencarbonate by forming carboxy phosphate which reacts with ammonia to form carbamoyl phosphate. This Bacillus cereus (strain G9842) protein is Carbamoyl phosphate synthase large chain.